A 362-amino-acid chain; its full sequence is METRKIIHVDMDAFYASVEQRDFPEYKGKPLIVGGPPNSRSVVSAASYEARKFGVRSAMPCSKAAQLAPQAIFVFPRFEVYKEVSKQIREIFLEYTDLVEMLSLDEGYLDVTFNKKNIPFAVTIAKEIRTEIFKRTELTASAGVGNSKFISKLASEKNKPNGLTVVLPDDVISFIDPLPVSSFHGVGKVTARKMKELGIYTGKDLRTKSIDELVQHFGKMGIYYYKISRGEDERMVQSSRERKSLGAESTFDRDKLDYDDLLKQLKDVAVVVERRLEKKDFAGKTLTLKIKFYDFSLKTRSKTLSEPIFKADELYSTAIELFEEFFEIKYGKKSAIKAIRLLGISLSHPNSENEDPNLFLNL.

Residues 6–187 (IIHVDMDAFY…LPVSSFHGVG (182 aa)) enclose the UmuC domain. Positions 10 and 105 each coordinate Mg(2+). E106 is an active-site residue.

The protein belongs to the DNA polymerase type-Y family. In terms of assembly, monomer. The cofactor is Mg(2+).

The protein localises to the cytoplasm. The enzyme catalyses DNA(n) + a 2'-deoxyribonucleoside 5'-triphosphate = DNA(n+1) + diphosphate. Poorly processive, error-prone DNA polymerase involved in untargeted mutagenesis. Copies undamaged DNA at stalled replication forks, which arise in vivo from mismatched or misaligned primer ends. These misaligned primers can be extended by PolIV. Exhibits no 3'-5' exonuclease (proofreading) activity. May be involved in translesional synthesis, in conjunction with the beta clamp from PolIII. The sequence is that of DNA polymerase IV from Leptospira interrogans serogroup Icterohaemorrhagiae serovar copenhageni (strain Fiocruz L1-130).